The primary structure comprises 194 residues: Xanthine phosphoribosyltransferase (194 aa).

Leu20 and Asn27 together coordinate xanthine. 128–132 (ANGQA) is a 5-phospho-alpha-D-ribose 1-diphosphate binding site. Residue Lys156 coordinates xanthine.

This sequence belongs to the purine/pyrimidine phosphoribosyltransferase family. Xpt subfamily. In terms of assembly, homodimer.

It localises to the cytoplasm. The enzyme catalyses XMP + diphosphate = xanthine + 5-phospho-alpha-D-ribose 1-diphosphate. Its pathway is purine metabolism; XMP biosynthesis via salvage pathway; XMP from xanthine: step 1/1. Its function is as follows. Converts the preformed base xanthine, a product of nucleic acid breakdown, to xanthosine 5'-monophosphate (XMP), so it can be reused for RNA or DNA synthesis. The chain is Xanthine phosphoribosyltransferase from Geobacillus thermodenitrificans (strain NG80-2).